The chain runs to 325 residues: Protein translocase subunit SecF (325 aa).

Helical transmembrane passes span 36-56, 148-168, 175-197, 202-224, 254-274, and 281-301; these read GYIL…TKGF, LAQG…IYVG, LGFG…FSAL, DLTF…IVVF, TIIT…FGGP, and LALL…AIAI.

This sequence belongs to the SecD/SecF family. SecF subfamily. In terms of assembly, forms a complex with SecD. Part of the essential Sec protein translocation apparatus which comprises SecA, SecYEG and auxiliary proteins SecDF-YajC and YidC.

It is found in the cell inner membrane. In terms of biological role, part of the Sec protein translocase complex. Interacts with the SecYEG preprotein conducting channel. SecDF uses the proton motive force (PMF) to complete protein translocation after the ATP-dependent function of SecA. This chain is Protein translocase subunit SecF, found in Haemophilus influenzae (strain ATCC 51907 / DSM 11121 / KW20 / Rd).